The sequence spans 183 residues: NAD(P)H-quinone oxidoreductase subunit I, chloroplastic (183 aa).

4Fe-4S ferredoxin-type domains follow at residues 55–84 and 95–124; these read GRIHFEFDKCIACEVCVRVCPINLPVVDWE and TSYSIDFGVCIFCGNCVEYCPTNCLSMTEE. [4Fe-4S] cluster contacts are provided by cysteine 64, cysteine 67, cysteine 70, cysteine 74, cysteine 104, cysteine 107, cysteine 110, and cysteine 114.

Belongs to the complex I 23 kDa subunit family. As to quaternary structure, NDH is composed of at least 16 different subunits, 5 of which are encoded in the nucleus. Requires [4Fe-4S] cluster as cofactor.

The protein resides in the plastid. It is found in the chloroplast thylakoid membrane. It carries out the reaction a plastoquinone + NADH + (n+1) H(+)(in) = a plastoquinol + NAD(+) + n H(+)(out). It catalyses the reaction a plastoquinone + NADPH + (n+1) H(+)(in) = a plastoquinol + NADP(+) + n H(+)(out). NDH shuttles electrons from NAD(P)H:plastoquinone, via FMN and iron-sulfur (Fe-S) centers, to quinones in the photosynthetic chain and possibly in a chloroplast respiratory chain. The immediate electron acceptor for the enzyme in this species is believed to be plastoquinone. Couples the redox reaction to proton translocation, and thus conserves the redox energy in a proton gradient. This is NAD(P)H-quinone oxidoreductase subunit I, chloroplastic from Huperzia lucidula (Shining clubmoss).